The sequence spans 35 residues: Photosystem II reaction center protein M (35 aa).

A helical membrane pass occupies residues 7-27 (GFIATILFVLVPTVFLLILYI).

It belongs to the PsbM family. PSII is composed of 1 copy each of membrane proteins PsbA, PsbB, PsbC, PsbD, PsbE, PsbF, PsbH, PsbI, PsbJ, PsbK, PsbL, PsbM, PsbT, PsbX, PsbY, PsbZ, Psb30/Ycf12, peripheral proteins PsbO, CyanoQ (PsbQ), PsbU, PsbV and a large number of cofactors. It forms dimeric complexes.

The protein resides in the cellular thylakoid membrane. In terms of biological role, one of the components of the core complex of photosystem II (PSII). PSII is a light-driven water:plastoquinone oxidoreductase that uses light energy to abstract electrons from H(2)O, generating O(2) and a proton gradient subsequently used for ATP formation. It consists of a core antenna complex that captures photons, and an electron transfer chain that converts photonic excitation into a charge separation. This subunit is found at the monomer-monomer interface. The polypeptide is Photosystem II reaction center protein M (Gloeothece citriformis (strain PCC 7424) (Cyanothece sp. (strain PCC 7424))).